The following is a 160-amino-acid chain: Lymphocyte antigen 96 (160 aa).

Residues 1–16 (MLPFILFSTLLPLIFT) form the signal peptide. 3 cysteine pairs are disulfide-bonded: Cys25-Cys51, Cys37-Cys148, and Cys95-Cys105. N-linked (GlcNAc...) asparagine glycans are attached at residues Asn26, Asn77, and Asn101. The segment at 119–123 (FSFKG) is interaction with lipopolysaccharide. Asn150 carries an N-linked (GlcNAc...) asparagine glycan.

Heterogeneous homomer formed from homodimers; disulfide-linked. Belongs to the lipopolysaccharide (LPS) receptor, a multi-protein complex containing at least CD14, LY96 and TLR4. Binds to the extracellular domains of TLR2 and TLR4. Ligand binding induces interaction with TLR4 and oligomerization of the complex. In terms of processing, N-glycosylated.

The protein localises to the secreted. It is found in the extracellular space. Binds bacterial lipopolysaccharide (LPS). Cooperates with TLR4 in the innate immune response to bacterial lipopolysaccharide (LPS), and with TLR2 in the response to cell wall components from Gram-positive and Gram-negative bacteria. Enhances TLR4-dependent activation of NF-kappa-B. Cells expressing both LY96 and TLR4, but not TLR4 alone, respond to LPS. The protein is Lymphocyte antigen 96 (LY96) of Cricetulus griseus (Chinese hamster).